The sequence spans 667 residues: DNA ligase (667 aa).

NAD(+) is bound by residues D32–D36, S81–L82, and E111. Residue K113 is the N6-AMP-lysine intermediate of the active site. The NAD(+) site is built by R134, E168, K285, and K309. Zn(2+)-binding residues include C403, C406, C421, and C426. The 80-residue stretch at V588–I667 folds into the BRCT domain.

The protein belongs to the NAD-dependent DNA ligase family. LigA subfamily. Requires Mg(2+) as cofactor. Mn(2+) serves as cofactor.

The enzyme catalyses NAD(+) + (deoxyribonucleotide)n-3'-hydroxyl + 5'-phospho-(deoxyribonucleotide)m = (deoxyribonucleotide)n+m + AMP + beta-nicotinamide D-nucleotide.. In terms of biological role, DNA ligase that catalyzes the formation of phosphodiester linkages between 5'-phosphoryl and 3'-hydroxyl groups in double-stranded DNA using NAD as a coenzyme and as the energy source for the reaction. It is essential for DNA replication and repair of damaged DNA. The polypeptide is DNA ligase (Lysinibacillus sphaericus (strain C3-41)).